A 148-amino-acid polypeptide reads, in one-letter code: Deoxyuridine 5'-triphosphate nucleotidohydrolase (148 aa).

Substrate contacts are provided by residues 68 to 70, N81, 85 to 87, and K95; these read RSG and TID.

It belongs to the dUTPase family. The cofactor is Mg(2+).

The enzyme catalyses dUTP + H2O = dUMP + diphosphate + H(+). It functions in the pathway pyrimidine metabolism; dUMP biosynthesis; dUMP from dCTP (dUTP route): step 2/2. Its function is as follows. This enzyme is involved in nucleotide metabolism: it produces dUMP, the immediate precursor of thymidine nucleotides and it decreases the intracellular concentration of dUTP so that uracil cannot be incorporated into DNA. This is Deoxyuridine 5'-triphosphate nucleotidohydrolase from Rickettsia conorii (strain ATCC VR-613 / Malish 7).